Consider the following 102-residue polypeptide: Small ribosomal subunit protein uS10 (102 aa).

Belongs to the universal ribosomal protein uS10 family. In terms of assembly, part of the 30S ribosomal subunit.

Its function is as follows. Involved in the binding of tRNA to the ribosomes. The sequence is that of Small ribosomal subunit protein uS10 from Thermococcus gammatolerans (strain DSM 15229 / JCM 11827 / EJ3).